The chain runs to 208 residues: Large ribosomal subunit protein uL4 (208 aa).

Positions 47–58 (ARAARERSDVAR) are enriched in basic and acidic residues. The tract at residues 47–84 (ARAARERSDVARTGKKFGRQKGGGTARHGDRRAPIFIG) is disordered.

This sequence belongs to the universal ribosomal protein uL4 family. In terms of assembly, part of the 50S ribosomal subunit.

Its function is as follows. One of the primary rRNA binding proteins, this protein initially binds near the 5'-end of the 23S rRNA. It is important during the early stages of 50S assembly. It makes multiple contacts with different domains of the 23S rRNA in the assembled 50S subunit and ribosome. Forms part of the polypeptide exit tunnel. The polypeptide is Large ribosomal subunit protein uL4 (Sphingopyxis alaskensis (strain DSM 13593 / LMG 18877 / RB2256) (Sphingomonas alaskensis)).